The primary structure comprises 145 residues: Leghemoglobin-2 (145 aa).

The Globin domain maps to 3–145 (AFSDKQEGLV…ELAAAIKKAY (143 aa)). A nitrated tyrosine mark is found at tyrosine 26 and tyrosine 31. A heme b-binding site is contributed by serine 46. Serine 46 bears the Phosphoserine mark. Histidine 62 is a binding site for O2. Lysine 65, histidine 93, and lysine 96 together coordinate heme b. Tyrosine 134 carries the post-translational modification Nitrated tyrosine.

Belongs to the plant globin family. As to quaternary structure, monomer. Nitrated in effective nodules and particularly in hypoxic conditions; this mechanism may play a protective role in the symbiosis by buffering toxic peroxynitrite NO(2)(-). Nitration level decrease during nodule senescence. Post-translationally, phosphorylation at Ser-46 disrupts the molecular environment of its porphyrin ring oxygen binding pocket, thus leading to a reduced oxygen consumption and to the delivery of oxygen O(2) to symbiosomes. As to expression, root nodules.

The protein resides in the cytoplasm. It localises to the cytosol. The protein localises to the nucleus. Functionally, leghemoglobin that reversibly binds oxygen O(2) through a pentacoordinated heme iron. In root nodules, facilitates the diffusion of oxygen to the bacteroids while preventing the bacterial nitrogenase from being inactivated by buffering dioxygen, nitric oxide and carbon monoxide, and promoting the formation of reactive oxygen species (ROS, e.g. H(2)O(2)). This role is essential for symbiotic nitrogen fixation (SNF). In Vigna unguiculata (Cowpea), this protein is Leghemoglobin-2.